The chain runs to 779 residues: Polyribonucleotide nucleotidyltransferase (779 aa).

Mg(2+) contacts are provided by Asp-490 and Asp-496. The region spanning 557–618 (PHILSLKINP…EAVKARIEAV (62 aa)) is the KH domain. The S1 motif domain occupies 625-693 (GEEFEGTVVK…DRGKIDLIRP (69 aa)). Residues 699–752 (VPLREPRAPRGGDRGPRRDSDRGGDRGPRREFSDRGPRPEGARSERPEGQRTER) show a composition bias toward basic and acidic residues. The interval 699–779 (VPLREPRAPR…AAPVFPRRED (81 aa)) is disordered. The span at 757–767 (PATQESSQSSD) shows a compositional bias: polar residues.

It belongs to the polyribonucleotide nucleotidyltransferase family. It depends on Mg(2+) as a cofactor.

The protein resides in the cytoplasm. It catalyses the reaction RNA(n+1) + phosphate = RNA(n) + a ribonucleoside 5'-diphosphate. Involved in mRNA degradation. Catalyzes the phosphorolysis of single-stranded polyribonucleotides processively in the 3'- to 5'-direction. The chain is Polyribonucleotide nucleotidyltransferase from Deinococcus radiodurans (strain ATCC 13939 / DSM 20539 / JCM 16871 / CCUG 27074 / LMG 4051 / NBRC 15346 / NCIMB 9279 / VKM B-1422 / R1).